Here is a 78-residue protein sequence, read N- to C-terminus: Small ribosomal subunit protein bS18 (78 aa).

Belongs to the bacterial ribosomal protein bS18 family. Part of the 30S ribosomal subunit. Forms a tight heterodimer with protein bS6.

Its function is as follows. Binds as a heterodimer with protein bS6 to the central domain of the 16S rRNA, where it helps stabilize the platform of the 30S subunit. The chain is Small ribosomal subunit protein bS18 from Nocardioides sp. (strain ATCC BAA-499 / JS614).